The following is a 230-amino-acid chain: 7-cyano-7-deazaguanine synthase (230 aa).

Position 16-26 (16-26 (LSGGLDSMVSG)) interacts with ATP. Zn(2+)-binding residues include cysteine 195, cysteine 205, cysteine 208, and cysteine 211.

The protein belongs to the QueC family. Zn(2+) is required as a cofactor.

It carries out the reaction 7-carboxy-7-deazaguanine + NH4(+) + ATP = 7-cyano-7-deazaguanine + ADP + phosphate + H2O + H(+). Its pathway is purine metabolism; 7-cyano-7-deazaguanine biosynthesis. Functionally, catalyzes the ATP-dependent conversion of 7-carboxy-7-deazaguanine (CDG) to 7-cyano-7-deazaguanine (preQ(0)). In Rhizorhabdus wittichii (strain DSM 6014 / CCUG 31198 / JCM 15750 / NBRC 105917 / EY 4224 / RW1) (Sphingomonas wittichii), this protein is 7-cyano-7-deazaguanine synthase.